Consider the following 418-residue polypeptide: Light-independent protochlorophyllide reductase subunit N (418 aa).

[4Fe-4S] cluster is bound by residues C17, C42, and C103.

Belongs to the BchN/ChlN family. In terms of assembly, protochlorophyllide reductase is composed of three subunits; ChlL, ChlN and ChlB. Forms a heterotetramer of two ChlB and two ChlN subunits. Requires [4Fe-4S] cluster as cofactor.

The enzyme catalyses chlorophyllide a + oxidized 2[4Fe-4S]-[ferredoxin] + 2 ADP + 2 phosphate = protochlorophyllide a + reduced 2[4Fe-4S]-[ferredoxin] + 2 ATP + 2 H2O. Its pathway is porphyrin-containing compound metabolism; chlorophyll biosynthesis (light-independent). In terms of biological role, component of the dark-operative protochlorophyllide reductase (DPOR) that uses Mg-ATP and reduced ferredoxin to reduce ring D of protochlorophyllide (Pchlide) to form chlorophyllide a (Chlide). This reaction is light-independent. The NB-protein (ChlN-ChlB) is the catalytic component of the complex. This is Light-independent protochlorophyllide reductase subunit N from Prochlorococcus marinus subsp. pastoris (strain CCMP1986 / NIES-2087 / MED4).